The primary structure comprises 86 residues: Arminin 7246 (86 aa).

The first 18 residues, 1–18 (MRPEYAVLFLALIALTYA), serve as a signal peptide directing secretion. The propeptide occupies 19–57 (RSNEDVREEIKNEIEKDILEDLVEDEGELDDKAIDVNDA). Alanine 83 bears the Alanine amide mark.

This sequence belongs to the arminin family. As to expression, expressed in entodermal epithelium along the body column.

The protein localises to the secreted. The protein resides in the target cell membrane. In terms of biological role, antimicrobial peptide with a broad-spectrum antimicrobial activity. Keeps its antibacterial activity under a wide range of salt concentrations that mimic physiological conditions of human blood, which is surprising, since Hydra is an obligate freshwater animal with nearly no salt tolerance. Does not affect red blood cells. The chain is Arminin 7246 from Hydra viridissima (Green hydra).